The primary structure comprises 311 residues: tRNA dimethylallyltransferase (311 aa).

Gly-9–Thr-16 contacts ATP. Substrate is bound at residue Thr-11–Thr-16. Residues Asp-34–Gln-37 are interaction with substrate tRNA.

It belongs to the IPP transferase family. As to quaternary structure, monomer. It depends on Mg(2+) as a cofactor.

The enzyme catalyses adenosine(37) in tRNA + dimethylallyl diphosphate = N(6)-dimethylallyladenosine(37) in tRNA + diphosphate. Catalyzes the transfer of a dimethylallyl group onto the adenine at position 37 in tRNAs that read codons beginning with uridine, leading to the formation of N6-(dimethylallyl)adenosine (i(6)A). This is tRNA dimethylallyltransferase from Clostridium botulinum (strain Okra / Type B1).